Consider the following 273-residue polypeptide: Diaminopimelate epimerase (273 aa).

Residues Asn-11 and Asn-60 each coordinate substrate. Residue Cys-69 is the Proton donor of the active site. Residues 70–71 (GN), Asn-181, and 199–200 (ER) contribute to the substrate site. Cys-209 (proton acceptor) is an active-site residue. 210–211 (GT) is a substrate binding site.

This sequence belongs to the diaminopimelate epimerase family. In terms of assembly, homodimer.

Its subcellular location is the cytoplasm. It carries out the reaction (2S,6S)-2,6-diaminopimelate = meso-2,6-diaminopimelate. Its pathway is amino-acid biosynthesis; L-lysine biosynthesis via DAP pathway; DL-2,6-diaminopimelate from LL-2,6-diaminopimelate: step 1/1. Functionally, catalyzes the stereoinversion of LL-2,6-diaminopimelate (L,L-DAP) to meso-diaminopimelate (meso-DAP), a precursor of L-lysine and an essential component of the bacterial peptidoglycan. The sequence is that of Diaminopimelate epimerase from Helicobacter pylori (strain ATCC 700392 / 26695) (Campylobacter pylori).